Consider the following 2439-residue polypeptide: Centrosomal protein of 290 kDa (2439 aa).

2 coiled-coil regions span residues 75 to 913 and 1271 to 1576; these read AEQA…VVTE and NTML…YMDT. 3 disordered regions span residues 1802–1824, 1867–1890, and 2017–2048; these read ETLNKDLQRSQKSQNKLQSEKEA, ELDRKSISEPADKRSTLKEDKSSK, and ESRLSKEPPSRPSTSGRGSDTPSQREHEFQKE. Basic and acidic residues predominate over residues 2039 to 2048; the sequence is SQREHEFQKE. Residues 2046-2394 adopt a coiled-coil conformation; that stretch reads QKENLRLSTE…KLTQELKHFD (349 aa).

In terms of assembly, part of the tectonic-like complex (also named B9 complex).

Its subcellular location is the cytoplasm. The protein localises to the cytoskeleton. It is found in the microtubule organizing center. It localises to the centrosome. The protein resides in the centriolar satellite. Its subcellular location is the nucleus. The protein localises to the cilium basal body. Functionally, involved in early and late steps in cilia formation. May play a role in early ciliogenesis in the disappearance of centriolar satellites and in the transition of primary ciliar vesicles (PCVs) to capped ciliary vesicles (CCVs). In the ciliary transition zone is part of the tectonic-like complex which is required for tissue-specific ciliogenesis and may regulate ciliary membrane composition. Involved in regulation of the BBSome complex integrity and in ciliary targeting of selected BBSome cargos. Required for the correct localization of ciliary and phototransduction proteins in retinal photoreceptor cells; may play a role in ciliary transport processes. Involved in development of the nervous system and kidney. The chain is Centrosomal protein of 290 kDa (cep290) from Danio rerio (Zebrafish).